Here is a 330-residue protein sequence, read N- to C-terminus: Methionyl-tRNA formyltransferase (330 aa).

112-115 (SLLP) serves as a coordination point for (6S)-5,6,7,8-tetrahydrofolate.

The protein belongs to the Fmt family.

The enzyme catalyses L-methionyl-tRNA(fMet) + (6R)-10-formyltetrahydrofolate = N-formyl-L-methionyl-tRNA(fMet) + (6S)-5,6,7,8-tetrahydrofolate + H(+). Functionally, attaches a formyl group to the free amino group of methionyl-tRNA(fMet). The formyl group appears to play a dual role in the initiator identity of N-formylmethionyl-tRNA by promoting its recognition by IF2 and preventing the misappropriation of this tRNA by the elongation apparatus. This Synechococcus sp. (strain RCC307) protein is Methionyl-tRNA formyltransferase.